A 124-amino-acid chain; its full sequence is Small ribosomal subunit protein bS6 (124 aa).

Residues glutamate 96–alanine 124 are disordered. The span at alanine 114 to alanine 124 shows a compositional bias: low complexity.

This sequence belongs to the bacterial ribosomal protein bS6 family.

In terms of biological role, binds together with bS18 to 16S ribosomal RNA. The sequence is that of Small ribosomal subunit protein bS6 from Burkholderia orbicola (strain AU 1054).